The sequence spans 419 residues: MGNRSTADADGLLAGRGPAAGASAGASAGLAGQGAAALVGGVLLIGAVLAGNSLVCVSVATERALQTPTNSFIVSLAAADLLLALLVLPLFVYSEVQGGAWLLSPRLCDALMAMDVMLCTASIFNLCAISVDRFVAVAVPLRYNRQGGSRRQLLLIGATWLLSAAVAAPVLCGLNDVRGRDPAVCRLEDRDYVVYSSVCSFFLPCPLMLLLYWATFRGLQRWEVARRAKLHGRAPRRPSGPGPPSPTPPAPRLPQDPCGPDCAPPAPGLPRGPCGPDCAPAAPSLPQDPCGPDCAPPAPGLPPDPCGSNCAPPDAVRAAALPPQTPPQTRRRRRAKITGRERKAMRVLPVVVGAFLLCWTPFFVVHITQALCPACSVPPRLVSAVTWLGYVNSALNPVIYTVFNAEFRNVFRKALRACC.

Topologically, residues M1 to G29 are extracellular. N-linked (GlcNAc...) asparagine glycosylation occurs at N3. The helical transmembrane segment at L30–A50 threads the bilayer. Over G51–S71 the chain is Cytoplasmic. The helical transmembrane segment at F72–V92 threads the bilayer. Position 80 (D80) interacts with Na(+). Over Y93–A110 the chain is Extracellular. C108 and C185 are disulfide-bonded. A helical transmembrane segment spans residues L111–V131. D115 serves as a coordination point for (2R,3R)-nemonapride. Residue S122 participates in Na(+) binding. Topologically, residues D132 to Q152 are cytoplasmic. A helical transmembrane segment spans residues L153–G173. The Extracellular portion of the chain corresponds to L174 to Y192. The helical transmembrane segment at V193 to W213 threads the bilayer. (2R,3R)-nemonapride is bound at residue S196. The Cytoplasmic portion of the chain corresponds to A214–R346. The tract at residues L230 to P264 is disordered. Over residues P238–P254 the composition is skewed to pro residues. The stretch at P249–P264 is one 1; approximate repeat. The interval P249 to P312 is 4 X 16 AA approximate tandem repeats of [PA]-A-P-G-L-P-[PQR]-[DG]-P-C-G-P-D-C-A-P. Tandem repeats lie at residues P265–P280 and A281–P296. The stretch at P297–P312 is one 4; approximate repeat. The tract at residues R317–K336 is disordered. The chain crosses the membrane as a helical span at residues V347–I367. The Extracellular segment spans residues T368–V382. Cysteines 372 and 375 form a disulfide. A helical membrane pass occupies residues S383 to F403. Topologically, residues N404 to C419 are cytoplasmic. Residue C419 is the site of S-palmitoyl cysteine attachment.

It belongs to the G-protein coupled receptor 1 family. In terms of assembly, forms homo- and heterooligomers with DRD2. D4.7 allele exhibits higher affinity for homodimers compared to DRD2 heterodimers, while alleles D42. and 4.4 have similar affinities for both. The interaction with DRD2 may modulate agonist-induced downstream signaling. Interacts with CLIC6. Interacts with GPRASP1. May interact with ADORA2A. Interacts with KLHL12. Polyubiquitinated by the BCR(KLHL12) E3 ubiquitin ligase complex: polyubiquitination does not lead to degradation of DRD4 protein. Post-translationally, palmitoylated. Palmitoylation of the C-terminal Cys is important for normal expression at the cell membrane. In terms of tissue distribution, highly expressed in retina. Detected at much lower levels in brain, in amygdala, thalamus, hypothalamus, cerebellum and pituitary.

The protein resides in the cell membrane. Signaling in response to agonists such as dopamine, epinephrine and norepinephrine is modulated by Na(+); lower Na(+) levels result in higher receptor activity (in vitro). Its function is as follows. Dopamine receptor responsible for neuronal signaling in the mesolimbic system of the brain, an area of the brain that regulates emotion and complex behavior. Activated by dopamine, but also by epinephrine and norepinephrine, and by numerous synthetic agonists and drugs. Agonist binding triggers signaling via G proteins that inhibit adenylyl cyclase. Modulates the circadian rhythm of contrast sensitivity by regulating the rhythmic expression of NPAS2 in the retinal ganglion cells. The protein is D(4) dopamine receptor (DRD4) of Homo sapiens (Human).